We begin with the raw amino-acid sequence, 80 residues long: Cell division protein ZapB (80 aa).

Residues 3-80 (LEILEQLEAK…GLLGKMDEVE (78 aa)) adopt a coiled-coil conformation. The interval 41 to 60 (LEQANNGRSEVEQEAQRARD) is disordered. Basic and acidic residues predominate over residues 49–60 (SEVEQEAQRARD).

Belongs to the ZapB family. In terms of assembly, homodimer. The ends of the coiled-coil dimer bind to each other, forming polymers. Interacts with FtsZ.

Its subcellular location is the cytoplasm. Functionally, non-essential, abundant cell division factor that is required for proper Z-ring formation. It is recruited early to the divisome by direct interaction with FtsZ, stimulating Z-ring assembly and thereby promoting cell division earlier in the cell cycle. Its recruitment to the Z-ring requires functional FtsA or ZipA. The chain is Cell division protein ZapB from Aliivibrio fischeri (strain ATCC 700601 / ES114) (Vibrio fischeri).